A 515-amino-acid polypeptide reads, in one-letter code: MDKISIIPIVGVALSLAIILQLGRTYWRLRHIPGPFPACITNFQRVGWVKTKRAHLILQDMHKKYGEVVRIGPNMVSFSNPEVIPTVYPARSGFPKGDFYVTLRPYTRGGGALHAVFNTTEEDLHKQIKSPIAPMFTPANTPSFEGLVDEVLTCIHEKLDENFIANSEIFNLGQWLQYFAFDVMGTMTFSKRYGFLDTGKDVGRMLGTIVDFMRDAAPMTQIPWLDWALRKNRIGDSIQRLFGKTASLGILGFVGKAIKERQELLSKGDFKVSDEKSGRKDFLTRFIELQQNDPKIPPWAPTAWTFSNVIAGSDSVGSLMRTTMFNLLVYPHTLEKLHDELRSAGVSRPYPKWSEIRNLLYLDACVQEGARMHPPFALPFERVVPAGGITILGYYLPGGTVVGGSPYVVNRHRETFGRDAEFWRPERWLESDEGHKRKLEQGVLTFGAGRRVCLGKHVGILEIKKLISFLVLNYDIRVVNPEKFELENSWFFFQRGLYATIRKRPDAVAVKNQQV.

The chain crosses the membrane as a helical span at residues 3 to 23 (KISIIPIVGVALSLAIILQLG). Cysteine 453 provides a ligand contact to heme.

The protein belongs to the cytochrome P450 family. Heme is required as a cofactor.

The protein localises to the membrane. The protein operates within secondary metabolite biosynthesis; terpenoid biosynthesis. Its function is as follows. Cytochrome P450 monooxygenase; part of the gene cluster that mediates the biosynthesis of the phthalide-terpenoid hybrid 11'-O-desmethylfendlerol. Within the pathway, mfma and mfmC act together to convert 3,5-dimethylorsellinic acid (DMOA) into the phthalide 5,7-dihydroxy-4-(hydroxymethyl)-6-methylphthalide. MfmA performs especially an hydroxylation at C-9. The biosynthesis of 11'-O-desmethylfendlerol begins with the NR-PKS mfmB that forms 3,5-dimethylorsellinic acid (DMOA), which is then transformed into the phthalide 5,7-dihydroxy-4-(hydroxymethyl)-6-methylphthalide by the cytochrome P450 monooxygenase mfmA and the hydrolase mfmC. Subsequently, the methyltransferase mfmE catalyzes 7-O-methylation to yield 5-hydroxy-4-(hydroxymethyl)-7-methoxy-6-methylphthalide, which undergoes C-3 hydroxylation by the cytochrome P450 monooxygenase mfmF. The resultant cyclopolic acid (2,5-dihydroxy-4-(hydroxymethyl)-7-methoxy-6-methylphthalide) is then farnesylated by the DMATS-type prenyltransferase mfmD to afford 5-O-farnesylcyclopolic acid. Finally, the Pyr4-family terpene cyclase mfmH cyclizes the farnesyl moiety of 5-O-farnesylcyclopolic acid into a drimane-like structure, thus completing the biosynthesis of 11'-O-desmethylfendlerol. This chain is Cytochrome P450 monooxygenase mfmA, found in Annulohypoxylon moriforme (Filamentous fungus).